Reading from the N-terminus, the 1026-residue chain is Multidrug resistance protein MdtC (1026 aa).

The next 11 membrane-spanning stretches (helical) occupy residues 15–35 (ILIA…LPVA), 333–353 (EVEE…FLFL), 360–380 (LIPA…MYLC), 387–407 (LSLM…IVVL), 431–451 (VGFT…PLLL), 463–483 (FAVT…TLTP), 528–548 (LVGV…IAIP), 853–873 (LILI…LYES), 897–917 (LFNA…IGIV), 953–973 (PIMM…LSGG), and 984–1004 (ITIV…TPVV).

This sequence belongs to the resistance-nodulation-cell division (RND) (TC 2.A.6) family. MdtC subfamily. Part of a tripartite efflux system composed of MdtA, MdtB and MdtC. MdtC forms a heteromultimer with MdtB.

The protein localises to the cell inner membrane. The sequence is that of Multidrug resistance protein MdtC from Salmonella dublin (strain CT_02021853).